Here is a 340-residue protein sequence, read N- to C-terminus: tRNA N6-adenosine threonylcarbamoyltransferase (340 aa).

Histidine 113 and histidine 117 together coordinate Fe cation. Substrate is bound by residues 135–139 (LVSGG), aspartate 169, glycine 182, aspartate 186, and asparagine 274. Aspartate 302 is a binding site for Fe cation.

It belongs to the KAE1 / TsaD family. Requires Fe(2+) as cofactor.

It localises to the cytoplasm. The enzyme catalyses L-threonylcarbamoyladenylate + adenosine(37) in tRNA = N(6)-L-threonylcarbamoyladenosine(37) in tRNA + AMP + H(+). Functionally, required for the formation of a threonylcarbamoyl group on adenosine at position 37 (t(6)A37) in tRNAs that read codons beginning with adenine. Is involved in the transfer of the threonylcarbamoyl moiety of threonylcarbamoyl-AMP (TC-AMP) to the N6 group of A37, together with TsaE and TsaB. TsaD likely plays a direct catalytic role in this reaction. The polypeptide is tRNA N6-adenosine threonylcarbamoyltransferase (Mycolicibacterium smegmatis (strain ATCC 700084 / mc(2)155) (Mycobacterium smegmatis)).